Reading from the N-terminus, the 89-residue chain is Small ribosomal subunit protein uS15 (89 aa).

The protein belongs to the universal ribosomal protein uS15 family. Part of the 30S ribosomal subunit. Forms a bridge to the 50S subunit in the 70S ribosome, contacting the 23S rRNA.

Functionally, one of the primary rRNA binding proteins, it binds directly to 16S rRNA where it helps nucleate assembly of the platform of the 30S subunit by binding and bridging several RNA helices of the 16S rRNA. In terms of biological role, forms an intersubunit bridge (bridge B4) with the 23S rRNA of the 50S subunit in the ribosome. The polypeptide is Small ribosomal subunit protein uS15 (Vibrio cholerae serotype O1 (strain ATCC 39541 / Classical Ogawa 395 / O395)).